A 525-amino-acid polypeptide reads, in one-letter code: GMP synthase [glutamine-hydrolyzing] (525 aa).

Residues 9-207 (RILILDFGSQ…VRDICQCEAL (199 aa)) form the Glutamine amidotransferase type-1 domain. Cys86 (nucleophile) is an active-site residue. Residues His181 and Glu183 contribute to the active site. The region spanning 208-400 (WTPAKIIDDA…LGLPYDMLYR (193 aa)) is the GMPS ATP-PPase domain. 235–241 (SGGVDSS) provides a ligand contact to ATP.

As to quaternary structure, homodimer.

The enzyme catalyses XMP + L-glutamine + ATP + H2O = GMP + L-glutamate + AMP + diphosphate + 2 H(+). It participates in purine metabolism; GMP biosynthesis; GMP from XMP (L-Gln route): step 1/1. Catalyzes the synthesis of GMP from XMP. This chain is GMP synthase [glutamine-hydrolyzing], found in Shigella boydii serotype 4 (strain Sb227).